Reading from the N-terminus, the 322-residue chain is CRISPR-associated endonuclease Cas1 (322 aa).

The Mn(2+) site is built by glutamate 149, histidine 214, and glutamate 229.

This sequence belongs to the CRISPR-associated endonuclease Cas1 family. In terms of assembly, homodimer, forms a heterotetramer with a Cas2 homodimer. Mg(2+) is required as a cofactor. Mn(2+) serves as cofactor.

CRISPR (clustered regularly interspaced short palindromic repeat), is an adaptive immune system that provides protection against mobile genetic elements (viruses, transposable elements and conjugative plasmids). CRISPR clusters contain spacers, sequences complementary to antecedent mobile elements, and target invading nucleic acids. CRISPR clusters are transcribed and processed into CRISPR RNA (crRNA). Acts as a dsDNA endonuclease. Involved in the integration of spacer DNA into the CRISPR cassette. The sequence is that of CRISPR-associated endonuclease Cas1 from Pyrococcus horikoshii (strain ATCC 700860 / DSM 12428 / JCM 9974 / NBRC 100139 / OT-3).